A 435-amino-acid polypeptide reads, in one-letter code: 3-phosphoshikimate 1-carboxyvinyltransferase (435 aa).

3-phosphoshikimate-binding residues include Lys15, Ser16, and Arg20. Phosphoenolpyruvate is bound at residue Lys15. Residues Gly96 and Arg124 each coordinate phosphoenolpyruvate. Residues Ser169, Gln171, Ser195, Asp318, and Lys345 each coordinate 3-phosphoshikimate. Gln171 is a binding site for phosphoenolpyruvate. Asp318 serves as the catalytic Proton acceptor. Arg349 and Arg393 together coordinate phosphoenolpyruvate.

It belongs to the EPSP synthase family. As to quaternary structure, monomer.

Its subcellular location is the cytoplasm. The enzyme catalyses 3-phosphoshikimate + phosphoenolpyruvate = 5-O-(1-carboxyvinyl)-3-phosphoshikimate + phosphate. The protein operates within metabolic intermediate biosynthesis; chorismate biosynthesis; chorismate from D-erythrose 4-phosphate and phosphoenolpyruvate: step 6/7. Catalyzes the transfer of the enolpyruvyl moiety of phosphoenolpyruvate (PEP) to the 5-hydroxyl of shikimate-3-phosphate (S3P) to produce enolpyruvyl shikimate-3-phosphate and inorganic phosphate. The protein is 3-phosphoshikimate 1-carboxyvinyltransferase of Chlorobium chlorochromatii (strain CaD3).